The chain runs to 368 residues: Trans-enoyl reductase TwmE (368 aa).

49-52 provides a ligand contact to NADP(+); it reads SDYK. 135 to 142 provides a ligand contact to substrate; the sequence is FKAATLGT. Residues 204 to 207, tyrosine 222, and 269 to 270 each bind NADP(+); these read SPRS and LE. Residue 290–294 participates in substrate binding; the sequence is SAELY. Residue 360 to 361 participates in NADP(+) binding; it reads HP.

It belongs to the zinc-containing alcohol dehydrogenase family. As to quaternary structure, monomer.

It participates in secondary metabolite biosynthesis. Functionally, trans-enoyl reductase; part of the gene cluster that mediates the biosynthesis of wortmanamides A and B, reduced long-chain polyketides amidated with a specific omega-amino acid, 5-aminopentanoic acid (5PA). The PKS modules of TwmB are involved in the synthesis of the polyketide backbone, whereas the non-canonical C domain of TwmB is a bonafide condensation domain that specifically selects 5PA and catalyzes amidation to release polyketide chain. The C domain clearly prefers C16 and C18 fatty acyl substrates, which is consistent with simultaneous formation of both octaketide and nonaketide acyl amides wortmanamides A and B. Because TwmB lacks a designated enoylreductase (ER) domain, the required activity is provided the enoyl reductase TwmE. The roles of the remaining enzymes have still to be clarified. The protein is Trans-enoyl reductase TwmE of Talaromyces wortmannii (Penicillium wortmannii).